The sequence spans 61 residues: MARYRHSRSRSRSRYRRRRRRRSRYRSRRRRYRGRRRRRSRRGRRRGYSRRRYSRRRRRRY.

The interval 1-61 (MARYRHSRSR…RYSRRRRRRY (61 aa)) is disordered.

The protein belongs to the protamine P1 family. As to expression, testis.

The protein resides in the nucleus. It localises to the chromosome. Its function is as follows. Protamines substitute for histones in the chromatin of sperm during the haploid phase of spermatogenesis. They compact sperm DNA into a highly condensed, stable and inactive complex. The protein is Sperm protamine P1 (PRM1) of Setonix brachyurus (Quokka).